A 167-amino-acid chain; its full sequence is Phosphopantetheine adenylyltransferase (167 aa).

Residue Thr13 participates in substrate binding. ATP is bound by residues 13-14 (TF) and His21. Lys45, Leu78, and Arg92 together coordinate substrate. ATP-binding positions include 93–95 (GLR), Glu103, and 128–134 (TQFISSS).

This sequence belongs to the bacterial CoaD family. In terms of assembly, homohexamer. Mg(2+) is required as a cofactor.

It localises to the cytoplasm. The enzyme catalyses (R)-4'-phosphopantetheine + ATP + H(+) = 3'-dephospho-CoA + diphosphate. The protein operates within cofactor biosynthesis; coenzyme A biosynthesis; CoA from (R)-pantothenate: step 4/5. In terms of biological role, reversibly transfers an adenylyl group from ATP to 4'-phosphopantetheine, yielding dephospho-CoA (dPCoA) and pyrophosphate. The protein is Phosphopantetheine adenylyltransferase of Wolbachia sp. subsp. Brugia malayi (strain TRS).